We begin with the raw amino-acid sequence, 580 residues long: Proline--tRNA ligase (580 aa).

The protein belongs to the class-II aminoacyl-tRNA synthetase family. ProS type 1 subfamily. As to quaternary structure, homodimer.

It is found in the cytoplasm. The enzyme catalyses tRNA(Pro) + L-proline + ATP = L-prolyl-tRNA(Pro) + AMP + diphosphate. Catalyzes the attachment of proline to tRNA(Pro) in a two-step reaction: proline is first activated by ATP to form Pro-AMP and then transferred to the acceptor end of tRNA(Pro). As ProRS can inadvertently accommodate and process non-cognate amino acids such as alanine and cysteine, to avoid such errors it has two additional distinct editing activities against alanine. One activity is designated as 'pretransfer' editing and involves the tRNA(Pro)-independent hydrolysis of activated Ala-AMP. The other activity is designated 'posttransfer' editing and involves deacylation of mischarged Ala-tRNA(Pro). The misacylated Cys-tRNA(Pro) is not edited by ProRS. The polypeptide is Proline--tRNA ligase (Maridesulfovibrio salexigens (strain ATCC 14822 / DSM 2638 / NCIMB 8403 / VKM B-1763) (Desulfovibrio salexigens)).